Consider the following 316-residue polypeptide: N-acetylmuramic acid 6-phosphate etherase (316 aa).

The interval 1–24 (MTRFQSDAAVSADRGHLMTEQPNP) is disordered. The SIS domain occupies 66–229 (IASRLKDGGR…STAVMVRLGK (164 aa)). Glutamate 94 (proton donor) is an active-site residue. The active site involves glutamate 125.

The protein belongs to the GCKR-like family. MurNAc-6-P etherase subfamily. In terms of assembly, homodimer.

The catalysed reaction is N-acetyl-D-muramate 6-phosphate + H2O = N-acetyl-D-glucosamine 6-phosphate + (R)-lactate. It functions in the pathway amino-sugar metabolism; N-acetylmuramate degradation. Its function is as follows. Specifically catalyzes the cleavage of the D-lactyl ether substituent of MurNAc 6-phosphate, producing GlcNAc 6-phosphate and D-lactate. This Parasynechococcus marenigrum (strain WH8102) protein is N-acetylmuramic acid 6-phosphate etherase.